We begin with the raw amino-acid sequence, 500 residues long: MSRSLTGALAHGFLGQSPLWYKAVICLFLVLNPLLLATIGPAAAGWALVIEFIFTLGMALKCYPLMPGGLLLIEALLLQMTTPQALYEELQHNFPVILLLMFMVAGIHFMKELLLFLFSRILLGVRSKAMLSLLFCVLSAFLSAFLDALTVTAVIISAAVGFYAVYHRVASGANPREDSALDSDQQVAQLHRDDLNQFRAFLRSLLMHGAVGTALGGVCTLVGEPQNLLIGHEMGWHFADFLLKVAPVSIPVLGAGLLTCVLLEKLRLFGYGTLMPETVRQVLAAYAAEDDAARTQAQRIALWVQGLAALILIICLGLHVAEVGLIGLMVIVLITAFTGITDEHRLGRAFQDAMPFTSLLVVFFAVVAVIHQQQLFSPLISWVLTLPAEQQPGMLYLANGLLSAISDNVFVATIYITEVKQAFLNGSMSREHFETLAVAINTGTNLPSVATPNGQAAFLFLLTSAIAPLIRLSYGRMVWMALPYTVVMGGLGWWAVTYWL.

13 helical membrane passes run 11–31, 34–54, 58–78, 96–116, 121–141, 145–165, 205–225, 241–261, 311–331, 350–370, 394–414, 450–470, and 477–497; these read HGFL…FLVL, LLLA…EFIF, MALK…ALLL, VILL…LLLF, ILLG…LSAF, FLDA…FYAV, LLMH…VGEP, FLLK…LTCV, ILII…LMVI, FQDA…VAVI, MLYL…VATI, ATPN…APLI, and MVWM…WAVT.

This sequence belongs to the NhaB Na(+)/H(+) (TC 2.A.34) antiporter family.

The protein resides in the cell inner membrane. The enzyme catalyses 2 Na(+)(in) + 3 H(+)(out) = 2 Na(+)(out) + 3 H(+)(in). Functionally, na(+)/H(+) antiporter that extrudes sodium in exchange for external protons. The sequence is that of Na(+)/H(+) antiporter NhaB from Pseudomonas putida (strain ATCC 700007 / DSM 6899 / JCM 31910 / BCRC 17059 / LMG 24140 / F1).